The primary structure comprises 360 residues: Photosystem II protein D1 (360 aa).

Topologically, residues 1-28 (MTTTLQRRESANLWERFCNWVTSTDNRL) are cytoplasmic. A helical transmembrane segment spans residues 29-46 (YVGWFGVIMIPTLLAATI). Residues 47-117 (CFVIAFIAAP…NGGPYQLIIF (71 aa)) lie on the Lumenal side of the membrane. Position 118 (His-118) interacts with chlorophyll a. A helical membrane pass occupies residues 118–133 (HFLLGASCYMGRQWEL). Positions 126 and 130 each coordinate pheophytin a. The Cytoplasmic portion of the chain corresponds to 134–141 (SYRLGMRP). The helical transmembrane segment at 142–156 (WICVAYSAPLASAFA) threads the bilayer. Position 147 (Tyr-147) interacts with pheophytin a. Residues 157 to 196 (VFLIYPIGQGSFSDGMPLGISGTFNFMIVFQAEHNILMHP) lie on the Lumenal side of the membrane. Residues Asp-170 and Glu-189 each coordinate [CaMn4O5] cluster. A helical membrane pass occupies residues 197–218 (FHQLGVAGVFGGALFCAMHGSL). His-198 is a chlorophyll a binding site. Residue Met-214 coordinates pheophytin a. Residues His-215 and 264–265 (SF) each bind a quinone. His-215 contributes to the Fe cation binding site. Topologically, residues 219–273 (VTSSLIRETTETESANYGYKFGQEEETYNIVAAHGYFGRLIFQYASFNNSRSLHF) are cytoplasmic. His-272 provides a ligand contact to Fe cation. Residues 274-288 (FLAAWRVVGVWFAAL) form a helical membrane-spanning segment. Residues 289–360 (GISTMAFNLN…VAMIAPSING (72 aa)) are Lumenal-facing. Residues His-332, Glu-333, Asp-342, and Ala-344 each coordinate [CaMn4O5] cluster. A propeptide spanning residues 345–360 (SAESAPVAMIAPSING) is cleaved from the precursor.

The protein belongs to the reaction center PufL/M/PsbA/D family. As to quaternary structure, PSII is composed of 1 copy each of membrane proteins PsbA, PsbB, PsbC, PsbD, PsbE, PsbF, PsbH, PsbI, PsbJ, PsbK, PsbL, PsbM, PsbT, PsbX, PsbY, PsbZ, Psb30/Ycf12, peripheral proteins PsbO, CyanoQ (PsbQ), PsbU, PsbV and a large number of cofactors. It forms dimeric complexes. It depends on The D1/D2 heterodimer binds P680, chlorophylls that are the primary electron donor of PSII, and subsequent electron acceptors. It shares a non-heme iron and each subunit binds pheophytin, quinone, additional chlorophylls, carotenoids and lipids. D1 provides most of the ligands for the Mn4-Ca-O5 cluster of the oxygen-evolving complex (OEC). There is also a Cl(-1) ion associated with D1 and D2, which is required for oxygen evolution. The PSII complex binds additional chlorophylls, carotenoids and specific lipids. as a cofactor. C-terminally processed by CtpA; processing is essential to allow assembly of the oxygen-evolving complex and thus photosynthetic growth. In terms of processing, tyr-161 forms a radical intermediate that is referred to as redox-active TyrZ, YZ or Y-Z.

It is found in the cellular thylakoid membrane. The catalysed reaction is 2 a plastoquinone + 4 hnu + 2 H2O = 2 a plastoquinol + O2. Its function is as follows. Photosystem II (PSII) is a light-driven water:plastoquinone oxidoreductase that uses light energy to abstract electrons from H(2)O, generating O(2) and a proton gradient subsequently used for ATP formation. It consists of a core antenna complex that captures photons, and an electron transfer chain that converts photonic excitation into a charge separation. The D1/D2 (PsbA/PsbD) reaction center heterodimer binds P680, the primary electron donor of PSII as well as several subsequent electron acceptors. The chain is Photosystem II protein D1 from Thermostichus vulcanus (Synechococcus vulcanus).